Consider the following 419-residue polypeptide: Mitogen-activated protein kinase spm1 (419 aa).

Positions 23-314 constitute a Protein kinase domain; that stretch reads YTVTKELGQG…VEEALEHPYL (292 aa). ATP-binding positions include 29 to 37 and Lys-52; that span reads LGQGAYGIV. Asp-149 (proton acceptor) is an active-site residue.

This sequence belongs to the protein kinase superfamily. Ser/Thr protein kinase family. MAP kinase subfamily. Mg(2+) serves as cofactor. Post-translationally, phosphorylated by the MAP kinase kinase mkk1.

The enzyme catalyses L-seryl-[protein] + ATP = O-phospho-L-seryl-[protein] + ADP + H(+). It catalyses the reaction L-threonyl-[protein] + ATP = O-phospho-L-threonyl-[protein] + ADP + H(+). Its function is as follows. Mitogen-activated protein kinase, part of the mkh1-mkk1-spm1 MAPK cascade that regulates vegetative growth, conidial formation, colony surface hydrophobicity, osmotic stress, cell wall integrity maintenance, carbon and nitrogen source utilization, chitin distribution, septa formation, and pathogenicity. In Cytospora mali (Apple Valsa canker fungus), this protein is Mitogen-activated protein kinase spm1.